Consider the following 348-residue polypeptide: MSDRLTLLRPDDWHIHLRDGAALANTVGDAARTFGRAIVMPNLVPPVRNAAEADAYRQRILAARPAASRFEPLMVLYLTDRTSAEEIRTAKASGFVHAAKLYPAGATTNSDSGVTRIDNIFEALEAMAEVGMPLLVHGEVTRAEVDVFDREKQFIDEHLRRVVERFPTLKVVFEHITTGDAAQFVREAPANVGATITAHHLLYNRNHMLVGGIRPHFYCLPILKRNTHQEALLDAAVSGNPKFFLGTDSAPHARHAKEAACGCAGCYSAYAAIELYAEAFEQRNALDKLEGFASLHGPDFYGLPRNTDRITLVREEWQAPASLPFGDFDVVPLRAGETLRWKLLEAGA.

Zn(2+) contacts are provided by H14 and H16. Residues 16–18 (HLR) and N42 contribute to the substrate site. Residues K100, H137, and H175 each coordinate Zn(2+). K100 bears the N6-carboxylysine mark. H137 is a substrate binding site. Residue L220 participates in substrate binding. D248 contributes to the Zn(2+) binding site. Residue D248 is part of the active site. Residues H252 and A264 each coordinate substrate.

The protein belongs to the metallo-dependent hydrolases superfamily. DHOase family. Class II DHOase subfamily. Homodimer. Zn(2+) is required as a cofactor.

The enzyme catalyses (S)-dihydroorotate + H2O = N-carbamoyl-L-aspartate + H(+). It functions in the pathway pyrimidine metabolism; UMP biosynthesis via de novo pathway; (S)-dihydroorotate from bicarbonate: step 3/3. Functionally, catalyzes the reversible cyclization of carbamoyl aspartate to dihydroorotate. This is Dihydroorotase from Pseudomonas aeruginosa (strain LESB58).